Consider the following 93-residue polypeptide: Large ribosomal subunit protein uL23 (93 aa).

Belongs to the universal ribosomal protein uL23 family. Part of the 50S ribosomal subunit. Contacts protein L29, and trigger factor when it is bound to the ribosome.

Functionally, one of the early assembly proteins it binds 23S rRNA. One of the proteins that surrounds the polypeptide exit tunnel on the outside of the ribosome. Forms the main docking site for trigger factor binding to the ribosome. The sequence is that of Large ribosomal subunit protein uL23 from Nautilia profundicola (strain ATCC BAA-1463 / DSM 18972 / AmH).